Here is a 45-residue protein sequence, read N- to C-terminus: Unknown protein from spots 23/28/205 of 2D-PAGE of thylakoid (45 aa).

It localises to the plastid. Its subcellular location is the chloroplast thylakoid. The polypeptide is Unknown protein from spots 23/28/205 of 2D-PAGE of thylakoid (Pisum sativum (Garden pea)).